We begin with the raw amino-acid sequence, 162 residues long: Shikimate kinase (162 aa).

Residue 11-16 (GSGKSS) participates in ATP binding. Ser15 serves as a coordination point for Mg(2+). Substrate-binding residues include Asp33, Arg57, and Gly80. Arg116 lines the ATP pocket. Arg132 is a substrate binding site.

This sequence belongs to the shikimate kinase family. In terms of assembly, monomer. Requires Mg(2+) as cofactor.

It localises to the cytoplasm. It catalyses the reaction shikimate + ATP = 3-phosphoshikimate + ADP + H(+). It participates in metabolic intermediate biosynthesis; chorismate biosynthesis; chorismate from D-erythrose 4-phosphate and phosphoenolpyruvate: step 5/7. Its function is as follows. Catalyzes the specific phosphorylation of the 3-hydroxyl group of shikimic acid using ATP as a cosubstrate. The protein is Shikimate kinase of Helicobacter pylori (strain J99 / ATCC 700824) (Campylobacter pylori J99).